Reading from the N-terminus, the 321-residue chain is ATP-dependent 6-phosphofructokinase (321 aa).

Glycine 12 serves as a coordination point for ATP. ADP-binding positions include 22–26 and 55–60; these read RGVVR and RYSVSD. ATP contacts are provided by residues 73–74 and 103–106; these read RF and GDGS. Position 104 (aspartate 104) interacts with Mg(2+). Substrate is bound at residue 127-129; the sequence is TID. Aspartate 129 (proton acceptor) is an active-site residue. Arginine 156 is a binding site for ADP. Residues arginine 164 and 171–173 each bind substrate; that span reads MGR. ADP contacts are provided by residues 187–189 and 215–217; these read GCE and KRH. Residues glutamate 224, arginine 245, and 251–254 contribute to the substrate site; that span reads HVQR.

This sequence belongs to the phosphofructokinase type A (PFKA) family. ATP-dependent PFK group I subfamily. Prokaryotic clade 'B1' sub-subfamily. Homotetramer. It depends on Mg(2+) as a cofactor.

The protein localises to the cytoplasm. The catalysed reaction is beta-D-fructose 6-phosphate + ATP = beta-D-fructose 1,6-bisphosphate + ADP + H(+). Its pathway is carbohydrate degradation; glycolysis; D-glyceraldehyde 3-phosphate and glycerone phosphate from D-glucose: step 3/4. With respect to regulation, allosterically activated by ADP and other diphosphonucleosides, and allosterically inhibited by phosphoenolpyruvate. In terms of biological role, catalyzes the phosphorylation of D-fructose 6-phosphate to fructose 1,6-bisphosphate by ATP, the first committing step of glycolysis. The protein is ATP-dependent 6-phosphofructokinase of Mannheimia succiniciproducens (strain KCTC 0769BP / MBEL55E).